The primary structure comprises 507 residues: MFS transporter fsa7 (507 aa).

Residues 1 to 65 are disordered; it reads MATKDPAVTT…PDDPEHPLNW (65 aa). N-linked (GlcNAc...) asparagine glycosylation is present at Asn64. Residues 72 to 92 traverse the membrane as a helical segment; the sequence is LHLVIVSLFTLAANLAATMFA. An N-linked (GlcNAc...) asparagine glycan is attached at Asn106. 5 consecutive transmembrane segments (helical) span residues 111–131, 146–166, 169–189, 200–220, and 228–248; these read AMTV…LAPL, FVYI…MFLV, IICG…VADL, ALFT…GGFV, and WTFR…VIFM. N-linked (GlcNAc...) asparagine glycosylation occurs at Asn252. Transmembrane regions (helical) follow at residues 302–322, 341–361, 379–399, 406–426, 429–449, and 472–492; these read PIVL…FLLF, GLAY…FSVL, LILM…YGWT, WIVP…VVIP, IYLV…ANLL, and GWGN…PWFF.

The protein belongs to the major facilitator superfamily.

The protein resides in the cell membrane. In terms of biological role, efflux pump that might be required for efficient secretion of fusarisetin A or other secondary metabolies produced by the fusarisetin A gene cluster. This Fusarium sp. (strain FN080326) protein is MFS transporter fsa7.